The following is a 657-amino-acid chain: MPDRLVPATLAFRDDGTLVSPAYGDIYHSAAGAIAQANHVFVAGNGLPARWQQRRTFTIVETGFGTGCNFLATWAAWRDDPARCERLHFVSVEKHPFSREDLRRAAAHIVANTTISASVDALADAWPPLVPGLHRLEFDAGRVVLTLVFGDALERLPTLVARADAFYLDGFAPSKNADLWSIDVFRALARMADEHATFATYSSSGVVKRALDEAGFAYRKVDGFAGKRAMLVGEYAPRWRMRRHEPPRAWPNAAARRALVIGAGVAGCAVVERLAARGWNVTLIERHERIASEASGNPAGVFHPLMTRDDNVASRLTRAGFLYALARWRALEAGGHAFARSTHGMVHLAESADDFARMRDAFDALGAPSDYARLLDTDAARAYLNLPVAHGGLLFPHGGAVWPAALADAQCAAAGDRVQRLTRTEVARLERNGDEWHALDAHGRTLAQAPVVVLANAGDAVRLAGLRHVALQPVRGQLTLLPAASASPPPCPAIGDGYAVPLDDGTLLIGATFEPDDVDPAIRVAGHAENLERVRRLLPGLIGDVPALDTLRGRVAFRWVAGDRLPLIGPLADEAQAVANARALSGAKARDLPRMPGLYGAFGYGSRGLVWAALGAELIASQLDGEPWPIERELAEAVDPARFLIRALRARQVSAAD.

The segment at 1–236 (MPDRLVPATL…KRAMLVGEYA (236 aa)) is tRNA (mnm(5)s(2)U34)-methyltransferase. The tract at residues 261–657 (IGAGVAGCAV…LRARQVSAAD (397 aa)) is FAD-dependent cmnm(5)s(2)U34 oxidoreductase.

The protein in the N-terminal section; belongs to the methyltransferase superfamily. tRNA (mnm(5)s(2)U34)-methyltransferase family. In the C-terminal section; belongs to the DAO family. The cofactor is FAD.

Its subcellular location is the cytoplasm. The enzyme catalyses 5-aminomethyl-2-thiouridine(34) in tRNA + S-adenosyl-L-methionine = 5-methylaminomethyl-2-thiouridine(34) in tRNA + S-adenosyl-L-homocysteine + H(+). In terms of biological role, catalyzes the last two steps in the biosynthesis of 5-methylaminomethyl-2-thiouridine (mnm(5)s(2)U) at the wobble position (U34) in tRNA. Catalyzes the FAD-dependent demodification of cmnm(5)s(2)U34 to nm(5)s(2)U34, followed by the transfer of a methyl group from S-adenosyl-L-methionine to nm(5)s(2)U34, to form mnm(5)s(2)U34. The sequence is that of tRNA 5-methylaminomethyl-2-thiouridine biosynthesis bifunctional protein MnmC from Burkholderia multivorans (strain ATCC 17616 / 249).